The primary structure comprises 530 residues: Na(+)/H(+) antiporter NhaB (530 aa).

12 consecutive transmembrane segments (helical) span residues 13 to 33 (FLGK…VINP), 34 to 54 (LVFF…EFIF), 90 to 110 (LVAN…IYFM), 121 to 141 (ILIG…TAAF), 145 to 165 (FLDA…FYAI), 205 to 225 (LLMH…VGEP), 241 to 261 (FIIR…LTCI), 306 to 326 (GLIA…VGLI), 351 to 371 (EEAL…AVII), 393 to 413 (LALF…VFVG), 455 to 475 (GQAA…QLSY), and 481 to 501 (MALP…IFFL).

The protein belongs to the NhaB Na(+)/H(+) (TC 2.A.34) antiporter family.

The protein resides in the cell inner membrane. It catalyses the reaction 2 Na(+)(in) + 3 H(+)(out) = 2 Na(+)(out) + 3 H(+)(in). Na(+)/H(+) antiporter that extrudes sodium in exchange for external protons. The sequence is that of Na(+)/H(+) antiporter NhaB from Aliivibrio fischeri (strain ATCC 700601 / ES114) (Vibrio fischeri).